The chain runs to 302 residues: Deubiquitinase OTUD6B (302 aa).

Positions 1–10 are enriched in acidic residues; the sequence is MEGSEDEEAE. Disordered regions lie at residues 1 to 52 and 99 to 121; these read MEGS…KQLA and EQQI…AALE. A compositionally biased stretch (basic residues) spans 106-116; it reads RISKAQKRREK. The 138-residue stretch at 156–293 folds into the OTU domain; sequence LEIKQIPSDG…GEHYNSVKLL (138 aa). Positions 161 to 167 are cys-loop; the sequence is IPSDGHC. Aspartate 164 is an active-site residue. Cysteine 167 serves as the catalytic Nucleophile. The variable-loop stretch occupies residues 228 to 238; it reads IANTAAWGGQL. Residues 276–286 form a his-loop region; that stretch reads YMRHAYGLGEH. The active site involves histidine 286.

The catalysed reaction is Thiol-dependent hydrolysis of ester, thioester, amide, peptide and isopeptide bonds formed by the C-terminal Gly of ubiquitin (a 76-residue protein attached to proteins as an intracellular targeting signal).. Functionally, deubiquitinating enzyme that may play a role in the ubiquitin-dependent regulation of different cellular processes. This Gallus gallus (Chicken) protein is Deubiquitinase OTUD6B (OTUD6B).